The following is a 146-amino-acid chain: Ribosome-binding factor A (146 aa).

The tract at residues 121-146 is disordered; that stretch reads KQQQFGSADDVTENDIDEADDTEGKA. Residues 130 to 146 are compositionally biased toward acidic residues; the sequence is DVTENDIDEADDTEGKA.

This sequence belongs to the RbfA family. In terms of assembly, monomer. Binds 30S ribosomal subunits, but not 50S ribosomal subunits or 70S ribosomes.

The protein resides in the cytoplasm. Functionally, one of several proteins that assist in the late maturation steps of the functional core of the 30S ribosomal subunit. Associates with free 30S ribosomal subunits (but not with 30S subunits that are part of 70S ribosomes or polysomes). Required for efficient processing of 16S rRNA. May interact with the 5'-terminal helix region of 16S rRNA. This is Ribosome-binding factor A from Shewanella sp. (strain MR-4).